Consider the following 83-residue polypeptide: Cytochrome b559 subunit alpha (83 aa).

The chain crosses the membrane as a helical span at residues 21–35 (VIHSITIPSLFIAGW). H23 serves as a coordination point for heme.

The protein belongs to the PsbE/PsbF family. As to quaternary structure, heterodimer of an alpha subunit and a beta subunit. PSII is composed of 1 copy each of membrane proteins PsbA, PsbB, PsbC, PsbD, PsbE, PsbF, PsbH, PsbI, PsbJ, PsbK, PsbL, PsbM, PsbT, PsbX, PsbY, PsbZ, Psb30/Ycf12, at least 3 peripheral proteins of the oxygen-evolving complex and a large number of cofactors. It forms dimeric complexes. It depends on heme b as a cofactor.

The protein localises to the plastid. It localises to the chloroplast thylakoid membrane. In terms of biological role, this b-type cytochrome is tightly associated with the reaction center of photosystem II (PSII). PSII is a light-driven water:plastoquinone oxidoreductase that uses light energy to abstract electrons from H(2)O, generating O(2) and a proton gradient subsequently used for ATP formation. It consists of a core antenna complex that captures photons, and an electron transfer chain that converts photonic excitation into a charge separation. The chain is Cytochrome b559 subunit alpha from Amborella trichopoda.